The chain runs to 259 residues: Phosphoribosylaminoimidazole-succinocarboxamide synthase (259 aa).

This sequence belongs to the SAICAR synthetase family.

It carries out the reaction 5-amino-1-(5-phospho-D-ribosyl)imidazole-4-carboxylate + L-aspartate + ATP = (2S)-2-[5-amino-1-(5-phospho-beta-D-ribosyl)imidazole-4-carboxamido]succinate + ADP + phosphate + 2 H(+). Its pathway is purine metabolism; IMP biosynthesis via de novo pathway; 5-amino-1-(5-phospho-D-ribosyl)imidazole-4-carboxamide from 5-amino-1-(5-phospho-D-ribosyl)imidazole-4-carboxylate: step 1/2. This is Phosphoribosylaminoimidazole-succinocarboxamide synthase from Zymomonas mobilis subsp. mobilis (strain ATCC 31821 / ZM4 / CP4).